The following is a 622-amino-acid chain: Matrilin-4 (622 aa).

Residues M1–E18 form the signal peptide. The region spanning D34 to L213 is the VWFA 1 domain. N69 carries N-linked (GlcNAc...) asparagine glycosylation. Residues G215–L255 enclose the EGF-like 1; incomplete domain. 12 disulfide bridges follow: C219/C230, C226/C239, C241/C254, C260/C271, C267/C280, C282/C295, C301/C312, C308/C321, C323/C336, C342/C353, C349/C362, and C364/C377. N251 is a glycosylation site (N-linked (GlcNAc...) asparagine). EGF-like domains lie at A256–Q292, A297–Q337, and C342–C377. N305 carries N-linked (GlcNAc...) asparagine glycosylation. The VWFA 2 domain maps to D386–L561. The stretch at G591–K622 forms a coiled coil.

In terms of assembly, interacts with COMP. In terms of tissue distribution, embryonic kidney, lung and placenta.

It is found in the secreted. Its function is as follows. Major component of the extracellular matrix of cartilage. The protein is Matrilin-4 (MATN4) of Homo sapiens (Human).